The chain runs to 121 residues: MALNIENIVAELENATILELSELVKAIEEKFDVTAAAPVAAAAGAGDAAAAKDSFDVELTSAGDKKVAVIKEVRGITGLGLKEAKELVDGAPTMIKEGLSESEANEVKEKLEAAGASITLK.

This sequence belongs to the bacterial ribosomal protein bL12 family. As to quaternary structure, homodimer. Part of the ribosomal stalk of the 50S ribosomal subunit. Forms a multimeric L10(L12)X complex, where L10 forms an elongated spine to which 2 to 4 L12 dimers bind in a sequential fashion. Binds GTP-bound translation factors.

Forms part of the ribosomal stalk which helps the ribosome interact with GTP-bound translation factors. Is thus essential for accurate translation. This is Large ribosomal subunit protein bL12 from Lactococcus lactis subsp. lactis (strain IL1403) (Streptococcus lactis).